Here is a 53-residue protein sequence, read N- to C-terminus: ATP synthase F(0) complex subunit 8 (53 aa).

A helical membrane pass occupies residues 8-24 (PWLTTFLIVWISLIVIL).

It belongs to the ATPase protein 8 family. Component of the ATP synthase complex composed at least of ATP5F1A/subunit alpha, ATP5F1B/subunit beta, ATP5MC1/subunit c (homooctomer), MT-ATP6/subunit a, MT-ATP8/subunit 8, ATP5ME/subunit e, ATP5MF/subunit f, ATP5MG/subunit g, ATP5MK/subunit k, ATP5MJ/subunit j, ATP5F1C/subunit gamma, ATP5F1D/subunit delta, ATP5F1E/subunit epsilon, ATP5PF/subunit F6, ATP5PB/subunit b, ATP5PD/subunit d, ATP5PO/subunit OSCP. ATP synthase complex consists of a soluble F(1) head domain (subunits alpha(3) and beta(3)) - the catalytic core - and a membrane F(0) domain - the membrane proton channel (subunits c, a, 8, e, f, g, k and j). These two domains are linked by a central stalk (subunits gamma, delta, and epsilon) rotating inside the F1 region and a stationary peripheral stalk (subunits F6, b, d, and OSCP).

It localises to the mitochondrion membrane. Functionally, subunit 8, of the mitochondrial membrane ATP synthase complex (F(1)F(0) ATP synthase or Complex V) that produces ATP from ADP in the presence of a proton gradient across the membrane which is generated by electron transport complexes of the respiratory chain. ATP synthase complex consist of a soluble F(1) head domain - the catalytic core - and a membrane F(1) domain - the membrane proton channel. These two domains are linked by a central stalk rotating inside the F(1) region and a stationary peripheral stalk. During catalysis, ATP synthesis in the catalytic domain of F(1) is coupled via a rotary mechanism of the central stalk subunits to proton translocation. In vivo, can only synthesize ATP although its ATP hydrolase activity can be activated artificially in vitro. Part of the complex F(0) domain. The polypeptide is ATP synthase F(0) complex subunit 8 (Alligator mississippiensis (American alligator)).